Reading from the N-terminus, the 382-residue chain is Intermediate transcription factor 3 large subunit (382 aa).

The protein belongs to the poxviruses A23 family. In terms of assembly, heterodimer of a 45 kDa and a 32 kDa subunit.

Acts with RNA polymerase to initiate transcription from intermediate gene promoters. The polypeptide is Intermediate transcription factor 3 large subunit (VITF3L) (Oryctolagus cuniculus (Rabbit)).